We begin with the raw amino-acid sequence, 474 residues long: 3-isopropylmalate dehydratase large subunit (474 aa).

Residues Cys-355, Cys-415, and Cys-418 each coordinate [4Fe-4S] cluster.

The protein belongs to the aconitase/IPM isomerase family. LeuC type 1 subfamily. Heterodimer of LeuC and LeuD. Requires [4Fe-4S] cluster as cofactor.

The catalysed reaction is (2R,3S)-3-isopropylmalate = (2S)-2-isopropylmalate. Its pathway is amino-acid biosynthesis; L-leucine biosynthesis; L-leucine from 3-methyl-2-oxobutanoate: step 2/4. In terms of biological role, catalyzes the isomerization between 2-isopropylmalate and 3-isopropylmalate, via the formation of 2-isopropylmaleate. This chain is 3-isopropylmalate dehydratase large subunit, found in Shewanella sp. (strain MR-7).